The primary structure comprises 173 residues: Bifunctional protein PyrR (173 aa).

The short motif at 94 to 106 is the PRPP-binding element; the sequence is VILIDDVLYTGRT.

Belongs to the purine/pyrimidine phosphoribosyltransferase family. PyrR subfamily. Homodimer and homohexamer; in equilibrium.

The enzyme catalyses UMP + diphosphate = 5-phospho-alpha-D-ribose 1-diphosphate + uracil. Regulates transcriptional attenuation of the pyrimidine nucleotide (pyr) operon by binding in a uridine-dependent manner to specific sites on pyr mRNA. This disrupts an antiterminator hairpin in the RNA and favors formation of a downstream transcription terminator, leading to a reduced expression of downstream genes. Functionally, also displays a weak uracil phosphoribosyltransferase activity which is not physiologically significant. This Streptococcus gordonii (strain Challis / ATCC 35105 / BCRC 15272 / CH1 / DL1 / V288) protein is Bifunctional protein PyrR.